The primary structure comprises 89 residues: Large ribosomal subunit protein eL34 (89 aa).

The segment at 45–71 is disordered; it reads GIPRGRPVEMRKLPKTKKRPERPMPHL.

Belongs to the eukaryotic ribosomal protein eL34 family. As to quaternary structure, part of the 50S ribosomal subunit.

In Pyrococcus furiosus (strain ATCC 43587 / DSM 3638 / JCM 8422 / Vc1), this protein is Large ribosomal subunit protein eL34.